Here is a 621-residue protein sequence, read N- to C-terminus: Glutamyl-tRNA(Gln) amidotransferase subunit B, mitochondrial (621 aa).

The transit peptide at 1 to 41 directs the protein to the mitochondrion; sequence MARLPTTELRKYLLTGQFTRRGCLHLRPSPLAPPIPPLRTL. 2 disordered regions span residues 26-86 and 106-136; these read LRPS…DNQT and SKLF…APFD. Low complexity-rich tracts occupy residues 38–57 and 110–120; these read LRTL…QIIP and SPASTPSSSSD.

It belongs to the GatB/GatE family. GatB subfamily. In terms of assembly, subunit of the heterotrimeric GatCAB amidotransferase (AdT) complex, composed of A, B and C subunits.

It is found in the mitochondrion. The catalysed reaction is L-glutamyl-tRNA(Gln) + L-glutamine + ATP + H2O = L-glutaminyl-tRNA(Gln) + L-glutamate + ADP + phosphate + H(+). Its function is as follows. Allows the formation of correctly charged Gln-tRNA(Gln) through the transamidation of misacylated Glu-tRNA(Gln) in the mitochondria. The reaction takes place in the presence of glutamine and ATP through an activated gamma-phospho-Glu-tRNA(Gln). The sequence is that of Glutamyl-tRNA(Gln) amidotransferase subunit B, mitochondrial from Podospora anserina (strain S / ATCC MYA-4624 / DSM 980 / FGSC 10383) (Pleurage anserina).